The following is a 174-amino-acid chain: Gamma-crystallin F (174 aa).

Beta/gamma crystallin 'Greek key' domains lie at 2–40 (GKIT…RVDS) and 41–83 (GCWM…RLIP). The tract at residues 84 to 87 (HTGS) is connecting peptide. 2 consecutive Beta/gamma crystallin 'Greek key' domains span residues 88-128 (HRLR…NVLE) and 129-171 (GWWV…RRAV).

It belongs to the beta/gamma-crystallin family.

Crystallins are the dominant structural components of the vertebrate eye lens. The chain is Gamma-crystallin F (CRYGF) from Bos taurus (Bovine).